The chain runs to 451 residues: UPF0210 protein NMB1652 (451 aa).

It belongs to the UPF0210 family. In terms of assembly, homodimer.

This Neisseria meningitidis serogroup B (strain ATCC BAA-335 / MC58) protein is UPF0210 protein NMB1652.